The sequence spans 186 residues: Transposon Tn21 resolvase (186 aa).

The 134-residue stretch at 4–137 (QRIGYIRVST…EGIALAKQRG (134 aa)) folds into the Resolvase/invertase-type recombinase catalytic domain. Serine 12 (O-(5'-phospho-DNA)-serine intermediate) is an active-site residue. The H-T-H motif DNA-binding region spans 164-183 (KTKLAREFGISRETLYQYLR).

This sequence belongs to the site-specific recombinase resolvase family.

Functionally, resolvase catalyzes the resolution (a site-specific recombination) of the cointegrated replicon to yield the final transposition products. This Escherichia coli protein is Transposon Tn21 resolvase (tnpR).